The sequence spans 308 residues: Probable GTP 3',8-cyclase (308 aa).

The region spanning R4–R224 is the Radical SAM core domain. R13 provides a ligand contact to GTP. The [4Fe-4S] cluster site is built by C20, C24, and C27. K60 contacts GTP. An S-adenosyl-L-methionine-binding site is contributed by G64. Residue T90 participates in GTP binding. Position 114 (S114) interacts with S-adenosyl-L-methionine. K151 lines the GTP pocket. Residues C245 and C248 each contribute to the [4Fe-4S] cluster site. R250–R252 lines the GTP pocket. Position 262 (C262) interacts with [4Fe-4S] cluster.

Belongs to the radical SAM superfamily. MoaA family. The cofactor is [4Fe-4S] cluster.

It carries out the reaction GTP + AH2 + S-adenosyl-L-methionine = (8S)-3',8-cyclo-7,8-dihydroguanosine 5'-triphosphate + 5'-deoxyadenosine + L-methionine + A + H(+). The protein operates within cofactor biosynthesis; molybdopterin biosynthesis. In terms of biological role, catalyzes the cyclization of GTP to (8S)-3',8-cyclo-7,8-dihydroguanosine 5'-triphosphate. This chain is Probable GTP 3',8-cyclase, found in Saccharolobus islandicus (strain Y.N.15.51 / Yellowstone #2) (Sulfolobus islandicus).